Here is a 545-residue protein sequence, read N- to C-terminus: Chaperonin GroEL 2 (545 aa).

ATP contacts are provided by residues 29-32 (TLGP), 86-90 (DGTTT), Gly-413, 479-481 (NAA), and Asp-495.

It belongs to the chaperonin (HSP60) family. As to quaternary structure, forms a cylinder of 14 subunits composed of two heptameric rings stacked back-to-back. Interacts with the co-chaperonin GroES.

The protein resides in the cytoplasm. The enzyme catalyses ATP + H2O + a folded polypeptide = ADP + phosphate + an unfolded polypeptide.. Together with its co-chaperonin GroES, plays an essential role in assisting protein folding. The GroEL-GroES system forms a nano-cage that allows encapsulation of the non-native substrate proteins and provides a physical environment optimized to promote and accelerate protein folding. The protein is Chaperonin GroEL 2 of Prochlorococcus marinus (strain AS9601).